A 94-amino-acid polypeptide reads, in one-letter code: Cystatin-A1 (94 aa).

A Secondary area of contact motif is present at residues 45–49 (QLVAG).

It belongs to the cystatin family.

It is found in the cytoplasm. In terms of biological role, intracellular thiol proteinase inhibitor. Inhibits papain, but not cathepsin B. The sequence is that of Cystatin-A1 (cpiA) from Dictyostelium discoideum (Social amoeba).